Consider the following 225-residue polypeptide: UPF0758 protein BCG9842_B0662 (225 aa).

Residues 103-225 (SIRSPEDCAK…FVSLKEKGHI (123 aa)) enclose the MPN domain. Zn(2+) is bound by residues His174, His176, and Asp187. A JAMM motif motif is present at residues 174–187 (HNHPSGDPTPSRED).

This sequence belongs to the UPF0758 family.

The polypeptide is UPF0758 protein BCG9842_B0662 (Bacillus cereus (strain G9842)).